A 120-amino-acid chain; its full sequence is Aspartate 1-decarboxylase (120 aa).

Serine 25 serves as the catalytic Schiff-base intermediate with substrate; via pyruvic acid. Position 25 is a pyruvic acid (Ser) (serine 25). Threonine 57 contributes to the substrate binding site. Tyrosine 58 acts as the Proton donor in catalysis. Glycine 73–alanine 75 provides a ligand contact to substrate.

The protein belongs to the PanD family. As to quaternary structure, heterooctamer of four alpha and four beta subunits. The cofactor is pyruvate. Is synthesized initially as an inactive proenzyme, which is activated by self-cleavage at a specific serine bond to produce a beta-subunit with a hydroxyl group at its C-terminus and an alpha-subunit with a pyruvoyl group at its N-terminus.

Its subcellular location is the cytoplasm. It carries out the reaction L-aspartate + H(+) = beta-alanine + CO2. It functions in the pathway cofactor biosynthesis; (R)-pantothenate biosynthesis; beta-alanine from L-aspartate: step 1/1. In terms of biological role, catalyzes the pyruvoyl-dependent decarboxylation of aspartate to produce beta-alanine. The polypeptide is Aspartate 1-decarboxylase (Coprothermobacter proteolyticus (strain ATCC 35245 / DSM 5265 / OCM 4 / BT)).